The sequence spans 250 residues: 5-oxoprolinase subunit A (250 aa).

Belongs to the LamB/PxpA family. As to quaternary structure, forms a complex composed of PxpA, PxpB and PxpC.

The catalysed reaction is 5-oxo-L-proline + ATP + 2 H2O = L-glutamate + ADP + phosphate + H(+). Its function is as follows. Catalyzes the cleavage of 5-oxoproline to form L-glutamate coupled to the hydrolysis of ATP to ADP and inorganic phosphate. This is 5-oxoprolinase subunit A from Staphylococcus aureus (strain bovine RF122 / ET3-1).